A 94-amino-acid chain; its full sequence is Progonadoliberin-1 (94 aa).

Positions 1-22 (MAAKILALWLLLAGTVFPQGCC) are cleaved as a signal peptide. Position 23 is a pyrrolidone carboxylic acid (Q23). Position 32 is a glycine amide (G32).

Belongs to the GnRH family. In terms of tissue distribution, synthesized in preoptic neurons and is transported to the pituitary in the preoptic-hypophyseal axons.

Its subcellular location is the secreted. Its function is as follows. Stimulates the secretion of gonadotropins. May be responsible for the regulation of the hypothalamic-pituitary-gonadal axis. The chain is Progonadoliberin-1 (gnrh1) from Haplochromis burtoni (Burton's mouthbrooder).